The sequence spans 610 residues: Dapper homolog 3 (610 aa).

The residue at position 6 (Ser-6) is a Phosphoserine. Disordered stretches follow at residues 50–76 (PGMG…RRAA), 102–179 (LESG…SVGA), and 200–579 (TCSS…PAGP). Residues 56-69 (EAEDEEDAEEDEDA) show a composition bias toward acidic residues. Residues 63–87 (AEEDEDAAAARRAAAALEEQLEALP) are a coiled coil. A compositionally biased stretch (low complexity) spans 120-138 (DPSSTGGPDSPPSTFCGDS). A phosphoserine mark is found at Ser-165 and Ser-237. At Arg-255 the chain carries Omega-N-methylarginine. Over residues 317 to 331 (PPEPAPPAAASPPSS) the composition is skewed to pro residues. Over residues 344–356 (PGAPAASRGLPGR) the composition is skewed to low complexity. Residues Ser-409 and Ser-456 each carry the phosphoserine modification. The segment covering 475-485 (PRGPAPSPSAP) has biased composition (pro residues). Positions 524–545 (ESESSASEGESPAFSSASSDSD) are enriched in low complexity. Residues 566–576 (GPGGAAGGGTP) show a composition bias toward gly residues. Positions 607–610 (MTTV) match the PDZ-binding motif.

It belongs to the dapper family. As to quaternary structure, can form homodimers and heterodimers with DACT1 or DACT3. Interacts with CSNK1D, PKA catalytic subunit, PKC-type kinase, DVL1, DVL2, DVL3, VANGL1, VANGL2 and CTNND1. In terms of tissue distribution, expressed in brain and uterus.

Functionally, may be involved in regulation of intracellular signaling pathways during development. Specifically thought to play a role in canonical and/or non-canonical Wnt signaling pathways through interaction with DSH (Dishevelled) family proteins. The protein is Dapper homolog 3 (Dact3) of Mus musculus (Mouse).